A 397-amino-acid chain; its full sequence is 2-deoxy-scyllo-inosose synthase (397 aa).

NAD(+)-binding positions include Asp-41, 71 to 74 (EPYK), 103 to 107 (GVIGN), 127 to 128 (TS), 138 to 140 (SLK), and 149 to 150 (KN). Lys-140 is an active-site residue. Glu-182 provides a ligand contact to Co(2+). The active site involves Glu-242. Co(2+) is bound by residues His-245 and His-261.

It belongs to the sugar phosphate cyclases superfamily. DOI synthase family. Requires NAD(+) as cofactor. The cofactor is Co(2+).

The enzyme catalyses D-glucose 6-phosphate = 2-deoxy-L-scyllo-inosose + phosphate. It functions in the pathway metabolic intermediate biosynthesis; 2-deoxystreptamine biosynthesis; 2-deoxystreptamine from D-glucose 6-phosphate: step 1/4. The protein operates within antibiotic biosynthesis; gentamicin biosynthesis. Its function is as follows. Catalyzes the intramolecular carbocycle formation from D-glucose-6-phosphate to 2-deoxy-scyllo-inosose (DOI). In Micromonospora echinospora (Micromonospora purpurea), this protein is 2-deoxy-scyllo-inosose synthase (gtmA).